The chain runs to 487 residues: DNA ligase (487 aa).

Residue K159 is the N6-AMP-lysine intermediate of the active site. ATP contacts are provided by R164, R182, and E217. E217 contributes to the a divalent metal cation binding site. Residues E229–A237 are interaction with the sliding clamp. E344 provides a ligand contact to a divalent metal cation. Residues R359 and K365 each contribute to the ATP site.

Belongs to the ATP-dependent DNA ligase family. As to quaternary structure, interacts with the sliding clamp. Requires a divalent metal cation as cofactor.

It catalyses the reaction ATP + (deoxyribonucleotide)n-3'-hydroxyl + 5'-phospho-(deoxyribonucleotide)m = (deoxyribonucleotide)n+m + AMP + diphosphate.. Its function is as follows. DNA ligase, which is expressed in the early stage of lytic development, has been implicated in T4 DNA synthesis and genetic recombination. It may also play a role in T4 DNA repair. The polypeptide is DNA ligase (30) (Escherichia coli (Bacteriophage T6)).